The primary structure comprises 538 residues: Succinyl-CoA:acetate CoA-transferase (538 aa).

305 to 309 (GVGSV) is a binding site for CoA. Catalysis depends on Glu-330, which acts as the 5-glutamyl coenzyme A thioester intermediate. 2 residues coordinate CoA: Asn-420 and Gly-424.

This sequence belongs to the acetyl-CoA hydrolase/transferase family.

The enzyme catalyses succinyl-CoA + acetate = succinate + acetyl-CoA. In terms of biological role, forms succinyl-CoA from succinate and acetyl-CoA. This chain is Succinyl-CoA:acetate CoA-transferase, found in Clostridium kluyveri (strain ATCC 8527 / DSM 555 / NBRC 12016 / NCIMB 10680 / K1).